We begin with the raw amino-acid sequence, 75 residues long: Large ribosomal subunit protein bL31 (75 aa).

Belongs to the bacterial ribosomal protein bL31 family. Type A subfamily. Part of the 50S ribosomal subunit.

Binds the 23S rRNA. In Chlorobaculum tepidum (strain ATCC 49652 / DSM 12025 / NBRC 103806 / TLS) (Chlorobium tepidum), this protein is Large ribosomal subunit protein bL31.